A 726-amino-acid chain; its full sequence is Catalase-peroxidase (726 aa).

Residues 91-214 (WHAAGTYRIG…LAAVQMGLIY (124 aa)) constitute a cross-link (tryptophyl-tyrosyl-methioninium (Trp-Tyr) (with M-240)). H92 acts as the Proton acceptor in catalysis. A cross-link (tryptophyl-tyrosyl-methioninium (Tyr-Met) (with W-91)) is located at residues 214–240 (YVNPEGPNGNPDPVAAAIDIRETFRRM). Residue H255 coordinates heme b. The interval 335 to 362 (AHQWKPKGNAGAGTVPDPADPSKRRSPS) is disordered.

Belongs to the peroxidase family. Peroxidase/catalase subfamily. As to quaternary structure, homodimer or homotetramer. Heme b serves as cofactor. In terms of processing, formation of the three residue Trp-Tyr-Met cross-link is important for the catalase, but not the peroxidase activity of the enzyme.

The enzyme catalyses H2O2 + AH2 = A + 2 H2O. It catalyses the reaction 2 H2O2 = O2 + 2 H2O. In terms of biological role, bifunctional enzyme with both catalase and broad-spectrum peroxidase activity. The polypeptide is Catalase-peroxidase (Cupriavidus metallidurans (strain ATCC 43123 / DSM 2839 / NBRC 102507 / CH34) (Ralstonia metallidurans)).